We begin with the raw amino-acid sequence, 313 residues long: Ribosomal protein L11 methyltransferase (313 aa).

S-adenosyl-L-methionine-binding residues include Thr161, Gly182, Asp204, and Asn246.

The protein belongs to the methyltransferase superfamily. PrmA family.

The protein localises to the cytoplasm. The catalysed reaction is L-lysyl-[protein] + 3 S-adenosyl-L-methionine = N(6),N(6),N(6)-trimethyl-L-lysyl-[protein] + 3 S-adenosyl-L-homocysteine + 3 H(+). Methylates ribosomal protein L11. The polypeptide is Ribosomal protein L11 methyltransferase (Acetivibrio thermocellus (strain ATCC 27405 / DSM 1237 / JCM 9322 / NBRC 103400 / NCIMB 10682 / NRRL B-4536 / VPI 7372) (Clostridium thermocellum)).